The primary structure comprises 852 residues: DNA repair protein rhp54 (852 aa).

2 short sequence motifs (nuclear localization signal) span residues 35–51 (KKFK…RKEL) and 178–181 (KRKK). A compositionally biased stretch (basic and acidic residues) spans 187–205 (NRKGKKEISDSEPESDHDS). A disordered region spans residues 187-208 (NRKGKKEISDSEPESDHDSCVS). A Helicase ATP-binding domain is found at 281–459 (GRIDRCANGC…FSLLNFANPG (179 aa)). 294–301 (DEMGLGKT) provides a ligand contact to ATP. Positions 410 to 413 (DEGH) match the DEGH box motif. Positions 614 to 767 (VLERMLYQIK…CVVDEAQDVE (154 aa)) constitute a Helicase C-terminal domain.

It belongs to the SNF2/RAD54 helicase family. Homohexamer. Interacts with rhp51.

It localises to the nucleus. The catalysed reaction is ATP + H2O = ADP + phosphate + H(+). In terms of biological role, plays an essential role in homologous recombination (HR) which is a major pathway for repairing DNA double-strand breaks (DSBs), single-stranded DNA (ssDNA) gaps, and stalled or collapsed replication forks. Acts as a molecular motor during the homology search and guides RAD51 ssDNA along a donor dsDNA thereby changing the homology search from the diffusion-based mechanism to a motor-guided mechanism. Plays also an essential role in RAD51-mediated synaptic complex formation which consists of three strands encased in a protein filament formed once homology is recognized. Once DNA strand exchange occured, dissociates RAD51 from nucleoprotein filaments formed on dsDNA. The chain is DNA repair protein rhp54 (rhp54) from Schizosaccharomyces pombe (strain 972 / ATCC 24843) (Fission yeast).